A 107-amino-acid chain; its full sequence is Iron-binding protein IscA (107 aa).

Residues Cys-35, Cys-99, and Cys-101 each coordinate Fe cation.

Belongs to the HesB/IscA family. Homodimer; may form tetramers and higher multimers. It depends on Fe cation as a cofactor.

Is able to transfer iron-sulfur clusters to apo-ferredoxin. Multiple cycles of [2Fe2S] cluster formation and transfer are observed, suggesting that IscA acts catalytically. Recruits intracellular free iron so as to provide iron for the assembly of transient iron-sulfur cluster in IscU in the presence of IscS, L-cysteine and the thioredoxin reductase system TrxA/TrxB. This chain is Iron-binding protein IscA, found in Yersinia pestis bv. Antiqua (strain Angola).